Consider the following 85-residue polypeptide: Type 3 secretion system needle filament protein (85 aa).

The stretch at 13–41 (LDTVANALKEQANAANKDVNDAIKALQGT) forms a coiled coil.

In terms of assembly, the core secretion machinery of the T3SS is composed of approximately 20 different proteins, including cytoplasmic components, a base, an export apparatus and a needle. This subunit polymerizes and forms the helical needle filament. Forms a stable heterotrimeric complex with PscE and PscG in the cytoplasm, blocking it in a monomeric state and preventing its polymerization.

The protein resides in the secreted. It is found in the cell surface. Functionally, component of the type III secretion system (T3SS), also called injectisome, which is used to inject bacterial effector proteins into eukaryotic host cells, facilitating the establishment and dissemination of infection. PscF/SctF forms the external needle filament that protrudes from the bacterial surface. The sequence is that of Type 3 secretion system needle filament protein from Pseudomonas aeruginosa (strain ATCC 15692 / DSM 22644 / CIP 104116 / JCM 14847 / LMG 12228 / 1C / PRS 101 / PAO1).